The chain runs to 903 residues: MLIKLLTKVFGSRNDRTLRRMRKVVDVINRMEPEFEKLSDDELKGKTAEFRARLEKGESLENLLPEAFATVREASKRVFAMRHFDVQLLGGMVLNERCIAEMRTGEGKTLTATLPAYLNALTGRGVHVVTVNDYLAQRDAENNRPLFEFLGLSVGINLPGMPAPVKRQAYAADITYGTNNEYGFDYLRDNMAFSPEERVQRKLHYALVDEVDSILIDEARTPLIISGPAEDSSELYIKVNKLIPKLIRQEKEDSETFQGEGHFSVDEKSRQVNLTERGLVLIEQLLSEASLMEEGESLYSPTNIMLMHHVTAALRAHALFTRDVDYIVKDGEVIIVDEHTGRTMQGRRWSDGLHQAVEAKEGVEIQNENQTLASITFQNYFRLYEKLAGMTGTADTEAFEFSSIYKLDTIVVPTNRPMIRNDLPDLVYMTEAEKIEAIIEDIRERTGKGQPVLVGTISIEKSELVSRELTNAGIEHNVLNAKFHAMEADIIAQAGQASAVTIATNMAGRGTDIVLGGSWQAEIAKLTEPTEAQIEEIKAAWQERHDRVLAAGGLHIIGTERHESRRIDNQLRGRSGRQGDAGSSRFYLSMEDSLMRIFASDRVTSMMRKLGMKPGEAIEHPWVTKAIANAQRKVESRNFDIRKQLLEYDDVANDQRRAIYAQRNDLLDVSDVSETIGSIREDVFKATIDAYIPPQSLEEMWDVEGLQQRLVTDFDLELPIKEWLDKEPELHEETLRERILEQAVEVYKRKEEIVGIEMMRNFEKGIMLQTLDMLWKEHLAAMDYLRQGIHLRGYAQKDPKQEYKRESFAMFASMLESLKYEVISTLSKVQVRLPEEVEALEQQRRAEAERLAKQQQLSHEVEKGALMSTTEAQIASGARKVGRNDPCPCGSGKKYKHCHGRLQ.

ATP-binding positions include Q87, G105–T109, and D512. Zn(2+)-binding residues include C887, C889, C898, and H899.

This sequence belongs to the SecA family. Monomer and homodimer. Part of the essential Sec protein translocation apparatus which comprises SecA, SecYEG and auxiliary proteins SecDF-YajC and YidC. Zn(2+) serves as cofactor.

Its subcellular location is the cell inner membrane. The protein resides in the cytoplasm. It carries out the reaction ATP + H2O + cellular proteinSide 1 = ADP + phosphate + cellular proteinSide 2.. In terms of biological role, part of the Sec protein translocase complex. Interacts with the SecYEG preprotein conducting channel. Has a central role in coupling the hydrolysis of ATP to the transfer of proteins into and across the cell membrane, serving both as a receptor for the preprotein-SecB complex and as an ATP-driven molecular motor driving the stepwise translocation of polypeptide chains across the membrane. This chain is Protein translocase subunit SecA, found in Photorhabdus laumondii subsp. laumondii (strain DSM 15139 / CIP 105565 / TT01) (Photorhabdus luminescens subsp. laumondii).